Reading from the N-terminus, the 226-residue chain is P24 oleosin isoform A (226 aa).

The tract at residues 1 to 76 is polar; that stretch reads MTTQVPPHSV…GILLLLAGLT (76 aa). Helical transmembrane passes span 56 to 76, 90 to 110, and 111 to 131; these read VLAVLAGLPVGGILLLLAGLT, LFVLFSPVLVPATVAIGLAVA, and GFLTSGAFGLTALSSFSWILN. Residues 77–130 are hydrophobic; it reads LAGTLTGLAVATPLFVLFSPVLVPATVAIGLAVAGFLTSGAFGLTALSSFSWIL. 5 repeat units span residues 159-165, 166-173, 184-191, 192-199, and 200-207. Residues 159–173 are 2 X 7 AA tandem repeats; it reads GQKTKEVGQKTKEVG. 2 stretches are compositionally biased toward basic and acidic residues: residues 164 to 173 and 181 to 216; these read EVGQKTKEVG and QDTREAAARDAREAAARDAREAAARDAKVEARDVKR. The tract at residues 164 to 226 is disordered; sequence EVGQKTKEVG…TTVTATTATA (63 aa). The tract at residues 184 to 207 is 3 X 8 AA tandem repeats; it reads REAAARDAREAAARDAREAAARDA. Residues 217–226 are compositionally biased toward low complexity; sequence TTVTATTATA.

This sequence belongs to the oleosin family.

The protein resides in the lipid droplet. The protein localises to the membrane. Its function is as follows. May have a structural role to stabilize the lipid body during desiccation of the seed by preventing coalescence of the oil. Probably interacts with both lipid and phospholipid moieties of lipid bodies. May also provide recognition signals for specific lipase anchorage in lipolysis during seedling growth. The protein is P24 oleosin isoform A of Glycine max (Soybean).